Reading from the N-terminus, the 486-residue chain is Ribulose bisphosphate carboxylase large chain 1 (486 aa).

Substrate-binding residues include asparagine 125 and threonine 175. The active-site Proton acceptor is lysine 177. Lysine 179 is a binding site for substrate. Mg(2+)-binding residues include lysine 203, aspartate 205, and glutamate 206. An N6-carboxylysine modification is found at lysine 203. Residue histidine 295 is the Proton acceptor of the active site. Positions 296, 328, and 380 each coordinate substrate.

It belongs to the RuBisCO large chain family. Type I subfamily. Heterohexadecamer of 8 large chains and 8 small chains. The cofactor is Mg(2+).

It catalyses the reaction 2 (2R)-3-phosphoglycerate + 2 H(+) = D-ribulose 1,5-bisphosphate + CO2 + H2O. The enzyme catalyses D-ribulose 1,5-bisphosphate + O2 = 2-phosphoglycolate + (2R)-3-phosphoglycerate + 2 H(+). Its function is as follows. RuBisCO catalyzes two reactions: the carboxylation of D-ribulose 1,5-bisphosphate, the primary event in carbon dioxide fixation, as well as the oxidative fragmentation of the pentose substrate. Both reactions occur simultaneously and in competition at the same active site. The protein is Ribulose bisphosphate carboxylase large chain 1 of Cereibacter sphaeroides (strain ATCC 17025 / ATH 2.4.3) (Rhodobacter sphaeroides).